The following is a 64-amino-acid chain: Protein translocase subunit SecE (64 aa).

Residues L35–I55 traverse the membrane as a helical segment.

This sequence belongs to the SecE/SEC61-gamma family. As to quaternary structure, component of the Sec protein translocase complex. Heterotrimer consisting of SecY, SecE and SecG subunits. The heterotrimers can form oligomers, although 1 heterotrimer is thought to be able to translocate proteins. Interacts with the ribosome. Interacts with SecDF, and other proteins may be involved. Interacts with SecA.

Its subcellular location is the cell membrane. Essential subunit of the Sec protein translocation channel SecYEG. Clamps together the 2 halves of SecY. May contact the channel plug during translocation. The protein is Protein translocase subunit SecE of Halalkalibacterium halodurans (strain ATCC BAA-125 / DSM 18197 / FERM 7344 / JCM 9153 / C-125) (Bacillus halodurans).